Consider the following 93-residue polypeptide: Integration host factor subunit beta (93 aa).

This sequence belongs to the bacterial histone-like protein family. In terms of assembly, heterodimer of an alpha and a beta chain.

Functionally, this protein is one of the two subunits of integration host factor, a specific DNA-binding protein that functions in genetic recombination as well as in transcriptional and translational control. The protein is Integration host factor subunit beta of Vibrio parahaemolyticus serotype O3:K6 (strain RIMD 2210633).